A 672-amino-acid polypeptide reads, in one-letter code: Tubulin--tyrosine ligase-like protein 12 (672 aa).

The 339-residue stretch at 332 to 670 (KIKIFLQIFA…LDEIDPTKVT (339 aa)) folds into the TTL domain. ATP-binding positions include 480-483 (CEYI), Lys-499, and Asp-501.

The protein belongs to the tubulin--tyrosine ligase family.

Regulates microtubule dynamics in uterine muscle cells. This is Tubulin--tyrosine ligase-like protein 12 from Caenorhabditis briggsae.